We begin with the raw amino-acid sequence, 490 residues long: Cobyric acid synthase (490 aa).

Positions 252–439 (RLKVVVPVLP…LHGLFESTAA (188 aa)) constitute a GATase cobBQ-type domain. Cysteine 333 acts as the Nucleophile in catalysis. Histidine 431 is an active-site residue.

Belongs to the CobB/CobQ family. CobQ subfamily.

The protein operates within cofactor biosynthesis; adenosylcobalamin biosynthesis. In terms of biological role, catalyzes amidations at positions B, D, E, and G on adenosylcobyrinic A,C-diamide. NH(2) groups are provided by glutamine, and one molecule of ATP is hydrogenolyzed for each amidation. The polypeptide is Cobyric acid synthase (Pseudomonas paraeruginosa (strain DSM 24068 / PA7) (Pseudomonas aeruginosa (strain PA7))).